Here is a 195-residue protein sequence, read N- to C-terminus: Ubiquitin-conjugating enzyme E2 T (195 aa).

A UBC core domain is found at 2 to 152; that stretch reads QRTSRLKREL…ARQWTEKHAR (151 aa). Residue Cys-86 is the Glycyl thioester intermediate of the active site. Lys-91 is covalently cross-linked (Glycyl lysine isopeptide (Lys-Gly) (interchain with G-Cter in ubiquitin)). Basic and acidic residues predominate over residues 146 to 157; that stretch reads WTEKHARQKTDE. The tract at residues 146-195 is disordered; it reads WTEKHARQKTDEEGMPGSLPEVGGSEGPSAAQKRKAGQLSSGGKRFCPDV. Lys-180 participates in a covalent cross-link: Glycyl lysine isopeptide (Lys-Gly) (interchain with G-Cter in ubiquitin). A Glycyl lysine isopeptide (Lys-Gly) (interchain with G-Cter in SUMO2) cross-link involves residue Lys-189.

Belongs to the ubiquitin-conjugating enzyme family. In terms of assembly, interacts with FANCL and BRCA1. Post-translationally, auto-ubiquitinated. Effects of auto-monoubiquitination at Lys-91 and Lys-180 are unclear.

The protein localises to the nucleus. It catalyses the reaction S-ubiquitinyl-[E1 ubiquitin-activating enzyme]-L-cysteine + [E2 ubiquitin-conjugating enzyme]-L-cysteine = [E1 ubiquitin-activating enzyme]-L-cysteine + S-ubiquitinyl-[E2 ubiquitin-conjugating enzyme]-L-cysteine.. It participates in protein modification; protein ubiquitination. Accepts ubiquitin from the E1 complex and catalyzes its covalent attachment to other proteins. Catalyzes monoubiquitination. Involved in mitomycin-C (MMC)-induced DNA repair: acts as a specific E2 ubiquitin-conjugating enzyme for the Fanconi anemia complex by associating with E3 ubiquitin-protein ligase FANCL and catalyzing monoubiquitination of FANCD2, a key step in the DNA damage pathway. Also mediates monoubiquitination of FANCL and FANCI. May contribute to ubiquitination and degradation of BRCA1. In vitro able to promote polyubiquitination using all 7 ubiquitin Lys residues, but may prefer 'Lys-11'-, 'Lys-27'-, 'Lys-48'- and 'Lys-63'-linked polyubiquitination. This chain is Ubiquitin-conjugating enzyme E2 T (UBE2T), found in Bos taurus (Bovine).